A 339-amino-acid polypeptide reads, in one-letter code: tRNA pseudouridine synthase D (339 aa).

Asp-80 functions as the Nucleophile in the catalytic mechanism. Positions Gly-155–Pro-311 constitute a TRUD domain.

Belongs to the pseudouridine synthase TruD family.

It catalyses the reaction uridine(13) in tRNA = pseudouridine(13) in tRNA. In terms of biological role, responsible for synthesis of pseudouridine from uracil-13 in transfer RNAs. The sequence is that of tRNA pseudouridine synthase D from Haemophilus influenzae (strain 86-028NP).